The sequence spans 865 residues: DNA topoisomerase 1 (865 aa).

Residues 3–142 (KALVIVESPA…RYSRVVFNEI (140 aa)) enclose the Toprim domain. Mg(2+) is bound at residue E9. The tract at residues 37-65 (LPTSGSAAKKSADSTSTKTAKKPKKDERG) is disordered. A compositionally biased stretch (low complexity) spans 39-54 (TSGSAAKKSADSTSTK). D111 contacts Mg(2+). One can recognise a Topo IA-type catalytic domain in the interval 158 to 575 (NINRVNAQQA…NFFSDFTQQL (418 aa)). The interval 192–197 (SAGRVQ) is interaction with DNA. Residue Y319 is the O-(5'-phospho-DNA)-tyrosine intermediate of the active site. C4-type zinc fingers lie at residues 599–630 (CPTCGRKMGIRTASTGVFLGCSGYALSPKERC), 662–689 (CQKCGTAMDSYLIDPKRKLHVCGNNPTC), and 711–736 (CEKCGSEMHLKMGRFGKYMACTNDEC).

It belongs to the type IA topoisomerase family. Monomer. Mg(2+) serves as cofactor.

It catalyses the reaction ATP-independent breakage of single-stranded DNA, followed by passage and rejoining.. Releases the supercoiling and torsional tension of DNA, which is introduced during the DNA replication and transcription, by transiently cleaving and rejoining one strand of the DNA duplex. Introduces a single-strand break via transesterification at a target site in duplex DNA. The scissile phosphodiester is attacked by the catalytic tyrosine of the enzyme, resulting in the formation of a DNA-(5'-phosphotyrosyl)-enzyme intermediate and the expulsion of a 3'-OH DNA strand. The free DNA strand then undergoes passage around the unbroken strand, thus removing DNA supercoils. Finally, in the religation step, the DNA 3'-OH attacks the covalent intermediate to expel the active-site tyrosine and restore the DNA phosphodiester backbone. This is DNA topoisomerase 1 from Salmonella typhimurium (strain LT2 / SGSC1412 / ATCC 700720).